A 210-amino-acid chain; its full sequence is Cancer/testis antigen 2 (210 aa).

2 stretches are compositionally biased toward gly residues: residues 1 to 47 (MQAE…GPRG) and 56 to 66 (PRGGAPRGPHG). Disordered regions lie at residues 1-80 (MQAE…PCGA) and 154-197 (GLGS…DGCR). The span at 163-177 (QKARDLRTPKHKVSE) shows a compositional bias: basic and acidic residues.

It belongs to the CTAG/PCC1 family. In terms of tissue distribution, testis and very low level in placenta and in some uterus samples. Observed in 25-50% of tumor samples of melanomas, non-small-cell lung carcinomas, bladder, prostate and head and neck cancers.

The sequence is that of Cancer/testis antigen 2 (CTAG2) from Homo sapiens (Human).